A 514-amino-acid polypeptide reads, in one-letter code: Probable peptidoglycan glycosyltransferase FtsW (514 aa).

A run of 9 helical transmembrane segments spans residues 45 to 65 (IGLIIVALALMTIGIIIVTSA), 86 to 106 (IYIVGAIIAAMVVLELPMQFW), 108 to 128 (TANPYLLLAAIGLLVAVLLVG), 137 to 157 (WLALGPITIQAAEPAKLFFFT), 182 to 202 (VVFFALAMLLLLQPDLGTVVV), 218 to 238 (LWQFFALVFAGVLAVVALIVF), 301 to 321 (ILAEELGFVGVLAVLGLILWM), 347 to 367 (VGIWFSFQTAVNIGASAGILP), and 373 to 393 (LPLVSYGGSSLIVMSVAVALL). Disordered stretches follow at residues 411-437 (GDNKRTSKAKAKPSAKSAAKPAVRTKH) and 449-501 (DYNQ…AGIK).

This sequence belongs to the SEDS family. FtsW subfamily.

The protein resides in the cell inner membrane. The catalysed reaction is [GlcNAc-(1-&gt;4)-Mur2Ac(oyl-L-Ala-gamma-D-Glu-L-Lys-D-Ala-D-Ala)](n)-di-trans,octa-cis-undecaprenyl diphosphate + beta-D-GlcNAc-(1-&gt;4)-Mur2Ac(oyl-L-Ala-gamma-D-Glu-L-Lys-D-Ala-D-Ala)-di-trans,octa-cis-undecaprenyl diphosphate = [GlcNAc-(1-&gt;4)-Mur2Ac(oyl-L-Ala-gamma-D-Glu-L-Lys-D-Ala-D-Ala)](n+1)-di-trans,octa-cis-undecaprenyl diphosphate + di-trans,octa-cis-undecaprenyl diphosphate + H(+). It participates in cell wall biogenesis; peptidoglycan biosynthesis. Its function is as follows. Peptidoglycan polymerase that is essential for cell division. This is Probable peptidoglycan glycosyltransferase FtsW from Alteromonas naphthalenivorans.